The following is a 63-amino-acid chain: Large ribosomal subunit protein bL28 (63 aa).

This sequence belongs to the bacterial ribosomal protein bL28 family.

The chain is Large ribosomal subunit protein bL28 from Heliobacterium modesticaldum (strain ATCC 51547 / Ice1).